We begin with the raw amino-acid sequence, 1059 residues long: DNA (cytosine-5)-methyltransferase CMT1 (1059 aa).

Disordered regions lie at residues 1-196 and 230-272; these read MVPE…GALA and CVGE…DEAR. The span at 29–41 shows a compositional bias: acidic residues; it reads AEAEAVADLDEID. 3 stretches are compositionally biased toward basic and acidic residues: residues 42–79, 92–129, and 147–157; these read REMSRAESRKRQRRTAKEKPGARKGATEWKPEDVEKAA, REMPRPELRKRQRRTAKEKPSAHEGATEWKPEDVEKAA, and SRGKRQRGVEK. Positions 158-167 are enriched in basic residues; that stretch reads VKRRTRKKTA. Basic and acidic residues predominate over residues 252–262; the sequence is RRVEDSDDHFV. The BAH domain maps to 312–436; sequence EIYHLDDDVY…VAYSTFANLP (125 aa). The SAM-dependent MTase C5-type domain occupies 479–1017; the sequence is ASLLDLYSGC…YALGLAYRGE (539 aa). A Chromo domain is found at 584-649; it reads FDVEELLEIC…KGHKENILPL (66 aa). Residue Cys662 is part of the active site.

It belongs to the class I-like SAM-binding methyltransferase superfamily. C5-methyltransferase family.

The protein resides in the nucleus. The catalysed reaction is a 2'-deoxycytidine in DNA + S-adenosyl-L-methionine = a 5-methyl-2'-deoxycytidine in DNA + S-adenosyl-L-homocysteine + H(+). Involved in CpXpG DNA methylation. May not play a major role in maintaining CpXpG methylation. The sequence is that of DNA (cytosine-5)-methyltransferase CMT1 from Oryza sativa subsp. japonica (Rice).